The chain runs to 153 residues: RNA-binding protein 3 (153 aa).

The RRM domain maps to 6–84 (GKLFVGGLNF…RQIRVDHAGK (79 aa)). Arg-47 bears the Omega-N-methylarginine mark. The segment at 81 to 153 (HAGKSARGSR…GGNYRDNYDN (73 aa)) is disordered. Residues 89–112 (SRGGAFGGRGRSYSRGGGDQGYGS) are compositionally biased toward gly residues. Asymmetric dimethylarginine; alternate is present on Arg-103. Arg-103 carries the post-translational modification Dimethylated arginine; alternate. Position 103 is an omega-N-methylarginine; alternate (Arg-103). Residues Arg-118 and Arg-128 each carry the omega-N-methylarginine modification. A phosphoserine mark is found at Ser-133 and Ser-143. Tyr-151 bears the Phosphotyrosine mark.

In terms of assembly, interacts with RPL4. Associates with the 60S ribosomal subunits in an RNA-independent manner. Post-translationally, arg-103 is dimethylated, probably to asymmetric dimethylarginine. Phosphorylated.

Its subcellular location is the nucleus. The protein localises to the cytoplasm. It is found in the cell projection. It localises to the dendrite. Functionally, cold-inducible mRNA binding protein that enhances global protein synthesis at both physiological and mild hypothermic temperatures. Reduces the relative abundance of microRNAs, when overexpressed. Enhances phosphorylation of translation initiation factors and active polysome formation. The chain is RNA-binding protein 3 (Rbm3) from Mus musculus (Mouse).